The following is a 418-amino-acid chain: Actin-related protein 3B (418 aa).

This sequence belongs to the actin family. ARP3 subfamily. Interacts with the Arp2/3 complex composed of ARP2, ARP3, ARPC1B, ARPC1B/p41-ARC, ARPC2/p34-ARC, ARPC3/p21-ARC, ARPC4/p20-ARC and ARPC5/p16-ARC.

The protein localises to the cytoplasm. It is found in the cytoskeleton. It localises to the cell projection. In terms of biological role, plays a role in the organization of the actin cytoskeleton. May function as ATP-binding component of the Arp2/3 complex which is involved in regulation of actin polymerization and together with an activating nucleation-promoting factor (NPF) mediates the formation of branched actin networks. May decrease the metastatic potential of tumors. The protein is Actin-related protein 3B (Actr3b) of Mus musculus (Mouse).